A 546-amino-acid chain; its full sequence is Chaperonin GroEL (546 aa).

ATP is bound by residues 30-33 (TLGP), Lys51, 87-91 (DGTTT), Gly415, 479-481 (NAA), and Asp495. Positions 526–546 (KEDAPMPGGMPGGMGGMGMDM) are disordered. The segment covering 534-546 (GMPGGMGGMGMDM) has biased composition (gly residues).

The protein belongs to the chaperonin (HSP60) family. Forms a cylinder of 14 subunits composed of two heptameric rings stacked back-to-back. Interacts with the co-chaperonin GroES.

It is found in the cytoplasm. The enzyme catalyses ATP + H2O + a folded polypeptide = ADP + phosphate + an unfolded polypeptide.. Together with its co-chaperonin GroES, plays an essential role in assisting protein folding. The GroEL-GroES system forms a nano-cage that allows encapsulation of the non-native substrate proteins and provides a physical environment optimized to promote and accelerate protein folding. This is Chaperonin GroEL from Burkholderia cepacia (Pseudomonas cepacia).